A 688-amino-acid chain; its full sequence is UvrABC system protein B (688 aa).

Positions 31–188 (GRVNAGEPDV…RKFVSMQYQR (158 aa)) constitute a Helicase ATP-binding domain. Residue 44–51 (GATGTGKS) coordinates ATP. The Beta-hairpin motif lies at 97–120 (YYDYYQPEAYVPQTDTFIEKDSSV). The region spanning 434–587 (QIDDLLEQIR…QVAYNTEHGI (154 aa)) is the Helicase C-terminal domain. Residues 607 to 632 (GEDTKKMLEGRGGGKRSPTPNLRREG) form a disordered region. The UVR domain occupies 642 to 677 (ETIISDLNDQMLQAAGELKFELAARLRDELGDLKRE).

Belongs to the UvrB family. Forms a heterotetramer with UvrA during the search for lesions. Interacts with UvrC in an incision complex.

Its subcellular location is the cytoplasm. Functionally, the UvrABC repair system catalyzes the recognition and processing of DNA lesions. A damage recognition complex composed of 2 UvrA and 2 UvrB subunits scans DNA for abnormalities. Upon binding of the UvrA(2)B(2) complex to a putative damaged site, the DNA wraps around one UvrB monomer. DNA wrap is dependent on ATP binding by UvrB and probably causes local melting of the DNA helix, facilitating insertion of UvrB beta-hairpin between the DNA strands. Then UvrB probes one DNA strand for the presence of a lesion. If a lesion is found the UvrA subunits dissociate and the UvrB-DNA preincision complex is formed. This complex is subsequently bound by UvrC and the second UvrB is released. If no lesion is found, the DNA wraps around the other UvrB subunit that will check the other stand for damage. The chain is UvrABC system protein B from Clavibacter sepedonicus (Clavibacter michiganensis subsp. sepedonicus).